The following is a 291-amino-acid chain: NAD kinase (291 aa).

The active-site Proton acceptor is aspartate 73. NAD(+)-binding positions include 73-74 (DG), 147-148 (ND), arginine 175, aspartate 177, 188-193 (TAYALS), alanine 212, and glutamine 246.

It belongs to the NAD kinase family. A divalent metal cation serves as cofactor.

The protein localises to the cytoplasm. It carries out the reaction NAD(+) + ATP = ADP + NADP(+) + H(+). In terms of biological role, involved in the regulation of the intracellular balance of NAD and NADP, and is a key enzyme in the biosynthesis of NADP. Catalyzes specifically the phosphorylation on 2'-hydroxyl of the adenosine moiety of NAD to yield NADP. The sequence is that of NAD kinase from Polaromonas sp. (strain JS666 / ATCC BAA-500).